The following is a 123-amino-acid chain: Protein Wnt-7b (123 aa).

S1 is lipidated: O-palmitoleoyl serine; by PORCN. The interval 33–61 is disordered linker; sequence VEVVRASRLRQPTFLKIKQIRSYQKPMET. C89 and C104 are oxidised to a cystine. A glycan (N-linked (GlcNAc...) asparagine) is linked at N90.

Belongs to the Wnt family. In terms of processing, palmitoleoylation is required for efficient binding to frizzled receptors. Depalmitoleoylation leads to Wnt signaling pathway inhibition.

The protein localises to the secreted. The protein resides in the extracellular space. Its subcellular location is the extracellular matrix. Functionally, ligand for members of the frizzled family of seven transmembrane receptors that functions in the canonical Wnt/beta-catenin signaling pathway. Required for normal fusion of the chorion and the allantois during placenta development. Required for central nervous system (CNS) angiogenesis and blood-brain barrier regulation. The sequence is that of Protein Wnt-7b (WNT-7B) from Sceloporus occidentalis (Western fence lizard).